A 147-amino-acid polypeptide reads, in one-letter code: Hemoglobin subunit epsilon (147 aa).

Residues 3 to 147 enclose the Globin domain; the sequence is HFTPEEKCII…VAIALAHKYH (145 aa). Position 51 is a phosphoserine (S51). The heme b site is built by H64 and H93.

It belongs to the globin family. Red blood cells.

Its function is as follows. Hemoglobin epsilon chain is a beta-type chain found in early embryos. The protein is Hemoglobin subunit epsilon (HBE1) of Oryctolagus cuniculus (Rabbit).